The primary structure comprises 169 residues: Crossover junction endodeoxyribonuclease RuvC (169 aa).

Catalysis depends on residues aspartate 12, glutamate 72, and aspartate 144. Residues aspartate 12, glutamate 72, and aspartate 144 each coordinate Mg(2+).

It belongs to the RuvC family. As to quaternary structure, homodimer which binds Holliday junction (HJ) DNA. The HJ becomes 2-fold symmetrical on binding to RuvC with unstacked arms; it has a different conformation from HJ DNA in complex with RuvA. In the full resolvosome a probable DNA-RuvA(4)-RuvB(12)-RuvC(2) complex forms which resolves the HJ. Mg(2+) is required as a cofactor.

Its subcellular location is the cytoplasm. It carries out the reaction Endonucleolytic cleavage at a junction such as a reciprocal single-stranded crossover between two homologous DNA duplexes (Holliday junction).. Its function is as follows. The RuvA-RuvB-RuvC complex processes Holliday junction (HJ) DNA during genetic recombination and DNA repair. Endonuclease that resolves HJ intermediates. Cleaves cruciform DNA by making single-stranded nicks across the HJ at symmetrical positions within the homologous arms, yielding a 5'-phosphate and a 3'-hydroxyl group; requires a central core of homology in the junction. The consensus cleavage sequence is 5'-(A/T)TT(C/G)-3'. Cleavage occurs on the 3'-side of the TT dinucleotide at the point of strand exchange. HJ branch migration catalyzed by RuvA-RuvB allows RuvC to scan DNA until it finds its consensus sequence, where it cleaves and resolves the cruciform DNA. In Azorhizobium caulinodans (strain ATCC 43989 / DSM 5975 / JCM 20966 / LMG 6465 / NBRC 14845 / NCIMB 13405 / ORS 571), this protein is Crossover junction endodeoxyribonuclease RuvC.